The primary structure comprises 138 residues: Basic phospholipase A2 chain HDP-2P (138 aa).

The first 16 residues, 1-16, serve as a signal peptide directing secretion; sequence MRILWIVAVCLIGVEG. 7 cysteine pairs are disulfide-bonded: C42–C131, C44–C60, C59–C111, C65–C138, C66–C104, C73–C97, and C91–C102. Positions 43, 45, and 47 each coordinate Ca(2+). H63 is an active-site residue. Ca(2+) is bound at residue D64. D105 is a catalytic residue.

Heterodimer of an acidic and a basic chain; non-covalently linked. The toxic basic protein has phospholipase A2 activity (chain HDP-2P) and the non-toxic acidic protein functions as its inhibitor (chain HPD-1I (AC A4VBF0)). It depends on Ca(2+) as a cofactor. As to expression, expressed by the venom gland.

Its subcellular location is the secreted. The catalysed reaction is a 1,2-diacyl-sn-glycero-3-phosphocholine + H2O = a 1-acyl-sn-glycero-3-phosphocholine + a fatty acid + H(+). Its activity is regulated as follows. Enzymatic activity and neurotoxicity are inhibited by Triton X-100. Triton X-100 has been determined to be located in the center of the hydrophobic channel of the enzyme. Its function is as follows. Monomer: snake venom phospholipase A2 (PLA2) that affects neuromuscular transmission presynaptically. It has catalytic activity, anticoagulant activity and weakly inhibits ADP-induced platelet aggregation. PLA2 catalyzes the calcium-dependent hydrolysis of the 2-acyl groups in 3-sn-phosphoglycerides. In terms of biological role, heterodimer: shows the same activities as the monomer, but with a lower potency. This Vipera nikolskii (Nikolsky's adder) protein is Basic phospholipase A2 chain HDP-2P.